A 392-amino-acid polypeptide reads, in one-letter code: Putative pectate lyase 21 (392 aa).

Positions 1–21 (MSIVCTFFLFLLNTSFAFAFA) are cleaved as a signal peptide. N-linked (GlcNAc...) asparagine glycosylation occurs at Asn-38. Ca(2+)-binding residues include Asp-189, Asp-213, and Asp-217. Asn-220 is a glycosylation site (N-linked (GlcNAc...) asparagine). Arg-269 is an active-site residue.

This sequence belongs to the polysaccharide lyase 1 family. Ca(2+) serves as cofactor.

It catalyses the reaction Eliminative cleavage of (1-&gt;4)-alpha-D-galacturonan to give oligosaccharides with 4-deoxy-alpha-D-galact-4-enuronosyl groups at their non-reducing ends.. It participates in glycan metabolism; pectin degradation; 2-dehydro-3-deoxy-D-gluconate from pectin: step 2/5. The chain is Putative pectate lyase 21 from Arabidopsis thaliana (Mouse-ear cress).